We begin with the raw amino-acid sequence, 207 residues long: Cytochrome c biogenesis ATP-binding export protein CcmA (207 aa).

An ABC transporter domain is found at 3–206; it reads LMAEGLSARR…AKSLEMTGFV (204 aa). 35–42 is a binding site for ATP; that stretch reads GPNGAGKS.

This sequence belongs to the ABC transporter superfamily. CcmA exporter (TC 3.A.1.107) family. As to quaternary structure, the complex is composed of two ATP-binding proteins (CcmA) and two transmembrane proteins (CcmB).

The protein localises to the cell inner membrane. The catalysed reaction is heme b(in) + ATP + H2O = heme b(out) + ADP + phosphate + H(+). In terms of biological role, part of the ABC transporter complex CcmAB involved in the biogenesis of c-type cytochromes; once thought to export heme, this seems not to be the case, but its exact role is uncertain. Responsible for energy coupling to the transport system. The polypeptide is Cytochrome c biogenesis ATP-binding export protein CcmA (Rhizobium meliloti (strain 1021) (Ensifer meliloti)).